The chain runs to 302 residues: Urease accessory protein UreD 1 (302 aa).

The protein belongs to the UreD family. In terms of assembly, ureD, UreF and UreG form a complex that acts as a GTP-hydrolysis-dependent molecular chaperone, activating the urease apoprotein by helping to assemble the nickel containing metallocenter of UreC. The UreE protein probably delivers the nickel.

Its subcellular location is the cytoplasm. Its function is as follows. Required for maturation of urease via the functional incorporation of the urease nickel metallocenter. This chain is Urease accessory protein UreD 1, found in Psychrobacter cryohalolentis (strain ATCC BAA-1226 / DSM 17306 / VKM B-2378 / K5).